The chain runs to 190 residues: FMRFamide-related peptides (190 aa).

Residues 1-21 (MSCSRTVALLAALWLVVGATS) form the signal peptide. Residues 22-33 (SPVRRSPDLEAR) constitute a propeptide that is removed on maturation. At F45 the chain carries Phenylalanine amide. The propeptide occupies 69 to 104 (GNSFLRFGRSQPLTLSTDDLVSLLRAYEEDYDTPMT). A Phenylalanine amide modification is found at F113. Positions 116-150 (DPNFIRLGRSADDDKSAFEQNSELVVSGYPQRKSR) are excised as a propeptide. A Leucine amide modification is found at L158. Positions 160–190 (RDSEEVNENEFEETEESRRKRSADSCHDCQS) are excised as a propeptide. Positions 161 to 190 (DSEEVNENEFEETEESRRKRSADSCHDCQS) are disordered. The segment covering 164 to 174 (EVNENEFEETE) has biased composition (acidic residues). Over residues 175–190 (ESRRKRSADSCHDCQS) the composition is skewed to basic and acidic residues.

This sequence belongs to the FARP (FMRFamide related peptide) family. As to expression, RFamide 1: Expressed in corpora cardiaca (CC), corpora allata (CA), antennal lobe (AL) and gnathal ganglion (GNG) (at protein level). Expression in AL detected in most animals, in CC, CA and in GNG in some animals (at protein level). RFamide precursor-related peptide 2: Expressed in corpora cardiaca (CC), corpora allata (CA), antennal lobe (AL) and gnathal ganglion (GNG) (at protein level). Expression in AL detected in some animals, expression in CC, CA and GNG in few animals (at protein level). RFamide 3: Expressed in corpora cardiaca (CC), corpora allata (CA), antennal lobe (AL) and gnathal ganglion (GNG) (at protein level). Expression in AL detected in all animals, in CC, CA and GNG in most animals (at protein level). RFamide 5: Expressed in corpora cardiaca (CC), corpora allata (CA), antennal lobe (AL) and gnathal ganglion (GNG) (at protein level). Expression in AL detected in all animals, in CC, CA and in GNG in some animals (at protein level).

The protein localises to the secreted. In insects, FMRFamide and related peptides have modulatory actions at skeletal neuromuscular junctions, and peptides that are immunologically related to FMRFamide are released into the circulation from neurohemal organs. The protein is FMRFamide-related peptides of Agrotis ipsilon (Black cutworm moth).